Consider the following 132-residue polypeptide: Agouti-signaling protein (132 aa).

Residues 1–22 (MDVTRLLLATLLVFLCFFTAYS) form the signal peptide. Asn39 is a glycosylation site (N-linked (GlcNAc...) asparagine). Positions 61 to 87 (QISRKEAEKKRSSKKEASMKKVARPRT) are disordered. Residues 63–79 (SRKEAEKKRSSKKEASM) show a composition bias toward basic and acidic residues. Cystine bridges form between Cys93-Cys108, Cys100-Cys114, Cys107-Cys125, Cys111-Cys132, and Cys116-Cys123. Residues 93 to 132 (CVATRDSCKPPAPACCDPCAFCQCRFFRSACSCRVLSLNC) enclose the Agouti domain.

The protein localises to the secreted. In terms of biological role, involved in the regulation of melanogenesis. The binding of ASP to MC1R precludes alpha-MSH initiated signaling and thus blocks production of cAMP, leading to a down-regulation of eumelanogenesis (brown/black pigment) and thus increasing synthesis of pheomelanin (yellow/red pigment). The chain is Agouti-signaling protein (ASIP) from Macaca hecki (Heck's macaque).